A 200-amino-acid chain; its full sequence is NAD(P)H dehydrogenase (quinone) (200 aa).

Positions 4–191 constitute a Flavodoxin-like domain; the sequence is VLVLYYSSYG…DIARYQGKHV (188 aa). FMN is bound by residues 10-15 and 79-81; these read SSYGHV and TRF. Tyrosine 12 serves as a coordination point for NAD(+). Tryptophan 99 contributes to the substrate binding site. FMN-binding positions include 114 to 120 and histidine 135; that span reads STGTQHG.

The protein belongs to the WrbA family. FMN is required as a cofactor.

The enzyme catalyses a quinone + NADH + H(+) = a quinol + NAD(+). The catalysed reaction is a quinone + NADPH + H(+) = a quinol + NADP(+). This chain is NAD(P)H dehydrogenase (quinone), found in Burkholderia cenocepacia (strain HI2424).